Reading from the N-terminus, the 104-residue chain is ATP-dependent Clp protease adapter protein ClpS (104 aa).

Belongs to the ClpS family. As to quaternary structure, binds to the N-terminal domain of the chaperone ClpA.

In terms of biological role, involved in the modulation of the specificity of the ClpAP-mediated ATP-dependent protein degradation. This chain is ATP-dependent Clp protease adapter protein ClpS, found in Paraburkholderia phymatum (strain DSM 17167 / CIP 108236 / LMG 21445 / STM815) (Burkholderia phymatum).